Here is a 58-residue protein sequence, read N- to C-terminus: ADVPGNYPLDKDGNTYKCFLLGGNEECLNVCKLHGVQYGYCYASKCWCEYLEDDKDSV.

In terms of domain architecture, LCN-type CS-alpha/beta spans 3 to 58; the sequence is VPGNYPLDKDGNTYKCFLLGGNEECLNVCKLHGVQYGYCYASKCWCEYLEDDKDSV. 3 cysteine pairs are disulfide-bonded: Cys18-Cys41, Cys27-Cys46, and Cys31-Cys48.

In terms of tissue distribution, expressed by the venom gland.

The protein localises to the secreted. Its function is as follows. Beta toxins bind voltage-independently at site-4 of sodium channels (Nav) and shift the voltage of activation toward more negative potentials thereby affecting sodium channel activation and promoting spontaneous and repetitive firing. Moderately toxic, but very high abundant. Does not target reptilian channels. Does not produce effect when administered to blowfly and cabbage looper larvae. In mice, produces convulsions, tremors, increased ventilation and, subsequently, death. The protein is Birtoxin of Parabuthus transvaalicus (Transvaal thick-tailed scorpion).